Consider the following 90-residue polypeptide: DNA-directed RNA polymerase subunit omega (90 aa).

The segment at Arg69–Arg90 is disordered.

It belongs to the RNA polymerase subunit omega family. As to quaternary structure, the RNAP catalytic core consists of 2 alpha, 1 beta, 1 beta' and 1 omega subunit. When a sigma factor is associated with the core the holoenzyme is formed, which can initiate transcription.

It catalyses the reaction RNA(n) + a ribonucleoside 5'-triphosphate = RNA(n+1) + diphosphate. Functionally, promotes RNA polymerase assembly. Latches the N- and C-terminal regions of the beta' subunit thereby facilitating its interaction with the beta and alpha subunits. The chain is DNA-directed RNA polymerase subunit omega from Vibrio vulnificus (strain CMCP6).